A 146-amino-acid polypeptide reads, in one-letter code: Small ribosomal subunit protein bS6 (146 aa).

Residues 106–146 (QAAATQRAAERRAQREAERNAAQAQSSASNQARTAATTSGK) form a disordered region. Residues 113-124 (AAERRAQREAER) show a composition bias toward basic and acidic residues. Low complexity predominate over residues 125 to 146 (NAAQAQSSASNQARTAATTSGK).

This sequence belongs to the bacterial ribosomal protein bS6 family.

Functionally, binds together with bS18 to 16S ribosomal RNA. The polypeptide is Small ribosomal subunit protein bS6 (Oenococcus oeni (strain ATCC BAA-331 / PSU-1)).